The following is a 491-amino-acid chain: Aspartyl/glutamyl-tRNA(Asn/Gln) amidotransferase subunit B (491 aa).

This sequence belongs to the GatB/GatE family. GatB subfamily. In terms of assembly, heterotrimer of A, B and C subunits.

The catalysed reaction is L-glutamyl-tRNA(Gln) + L-glutamine + ATP + H2O = L-glutaminyl-tRNA(Gln) + L-glutamate + ADP + phosphate + H(+). The enzyme catalyses L-aspartyl-tRNA(Asn) + L-glutamine + ATP + H2O = L-asparaginyl-tRNA(Asn) + L-glutamate + ADP + phosphate + 2 H(+). Functionally, allows the formation of correctly charged Asn-tRNA(Asn) or Gln-tRNA(Gln) through the transamidation of misacylated Asp-tRNA(Asn) or Glu-tRNA(Gln) in organisms which lack either or both of asparaginyl-tRNA or glutaminyl-tRNA synthetases. The reaction takes place in the presence of glutamine and ATP through an activated phospho-Asp-tRNA(Asn) or phospho-Glu-tRNA(Gln). This chain is Aspartyl/glutamyl-tRNA(Asn/Gln) amidotransferase subunit B, found in Burkholderia cenocepacia (strain ATCC BAA-245 / DSM 16553 / LMG 16656 / NCTC 13227 / J2315 / CF5610) (Burkholderia cepacia (strain J2315)).